Here is a 215-residue protein sequence, read N- to C-terminus: MFTGIIEEVGKIAQIHKQGEFAVVTINATKVLQDVHLGDTIAVNGVCLTVTSFSSNQFTADVMSETLKRTSLGELKSNSPVNLERAMAANGRFGGHIVSGHIDGTGEIAEITPAHNSTWYRIKTSPKLMRYIIEKGSITIDGISLTVVDTDDESFRVSIIPHTIKETNLGSKKIGSIVNLENDIVGKYIEQFLLKKPADEPKSNLSLDFLKQAGF.

Lumazine-binding repeat units follow at residues 1 to 96 (MFTG…FGGH) and 97 to 193 (IVSG…EQFL). 2,4-dihydroxypteridine is bound by residues 4 to 6 (GII), 47 to 49 (CLT), 61 to 66 (DVMSET), 100 to 102 (GHI), Lys-135, 144 to 146 (SLT), and 158 to 163 (SIIPHT).

As to quaternary structure, homotrimer.

The catalysed reaction is 2 6,7-dimethyl-8-(1-D-ribityl)lumazine + H(+) = 5-amino-6-(D-ribitylamino)uracil + riboflavin. It participates in cofactor biosynthesis; riboflavin biosynthesis; riboflavin from 2-hydroxy-3-oxobutyl phosphate and 5-amino-6-(D-ribitylamino)uracil: step 2/2. Its function is as follows. Catalyzes the dismutation of two molecules of 6,7-dimethyl-8-ribityllumazine, resulting in the formation of riboflavin and 5-amino-6-(D-ribitylamino)uracil. This chain is Riboflavin synthase (ribE), found in Actinobacillus pleuropneumoniae (Haemophilus pleuropneumoniae).